A 169-amino-acid polypeptide reads, in one-letter code: Crossover junction endodeoxyribonuclease RuvC (169 aa).

Catalysis depends on residues Asp-11, Glu-71, and Asp-143. Mg(2+) is bound by residues Asp-11, Glu-71, and Asp-143.

This sequence belongs to the RuvC family. Homodimer which binds Holliday junction (HJ) DNA. The HJ becomes 2-fold symmetrical on binding to RuvC with unstacked arms; it has a different conformation from HJ DNA in complex with RuvA. In the full resolvosome a probable DNA-RuvA(4)-RuvB(12)-RuvC(2) complex forms which resolves the HJ. Mg(2+) serves as cofactor.

It localises to the cytoplasm. The catalysed reaction is Endonucleolytic cleavage at a junction such as a reciprocal single-stranded crossover between two homologous DNA duplexes (Holliday junction).. Functionally, the RuvA-RuvB-RuvC complex processes Holliday junction (HJ) DNA during genetic recombination and DNA repair. Endonuclease that resolves HJ intermediates. Cleaves cruciform DNA by making single-stranded nicks across the HJ at symmetrical positions within the homologous arms, yielding a 5'-phosphate and a 3'-hydroxyl group; requires a central core of homology in the junction. The consensus cleavage sequence is 5'-(A/T)TT(C/G)-3'. Cleavage occurs on the 3'-side of the TT dinucleotide at the point of strand exchange. HJ branch migration catalyzed by RuvA-RuvB allows RuvC to scan DNA until it finds its consensus sequence, where it cleaves and resolves the cruciform DNA. The chain is Crossover junction endodeoxyribonuclease RuvC from Rhizobium johnstonii (strain DSM 114642 / LMG 32736 / 3841) (Rhizobium leguminosarum bv. viciae).